We begin with the raw amino-acid sequence, 366 residues long: MEEDSPATVCVTGAAGFIGSWLVMRLLERGYVVHATVRDPGDLKKVKHLLELPKAQTNLKLWKADLTQEGSFDEAIQGCHGVFHLATPMDFESKDPENEIIKPTIEGVLSIIRSCVKAKTVKKLVFTSSAGTVNGQEKQLHVYDESHWSDLDFIYSKKMTAWMYFVSKTLAEKAAWDATKGNNISFISIIPTLVVGPFITSTFPPSLVTALSLITGNEAHYSIIKQGQYVHLDDLCECHIYLYENPKAKGRYICSSHDATIHQLAKIIKDKWPEYYIPTKFPGIDEELPIVSFSSKKLIDTGFEFKYNLEDMFKGAIDTCREKGLLPYSTIKNHINGNHVNGVHHYIKNNDDDHEKGLLCCSKEGQ.

Lys45 and Tyr164 together coordinate NADP(+).

It belongs to the NAD(P)-dependent epimerase/dehydratase family. Dihydroflavonol-4-reductase subfamily.

It catalyses the reaction a (2R,3S,4S)-leucoanthocyanidin + NADP(+) = a (2R,3R)-dihydroflavonol + NADPH + H(+). The catalysed reaction is (2S)-flavan-4-ol + NADP(+) = (2S)-flavanone + NADPH + H(+). It participates in pigment biosynthesis; anthocyanin biosynthesis. Bifunctional enzyme involved in flavonoid metabolism. The protein is Dihydroflavonol 4-reductase (DFR) of Gerbera hybrida (Daisy).